Reading from the N-terminus, the 157-residue chain is Protein Smg (157 aa).

Belongs to the Smg family.

The polypeptide is Protein Smg (Enterobacter sp. (strain 638)).